The primary structure comprises 292 residues: Malectin (292 aa).

Residues 1 to 28 form the signal peptide; that stretch reads MLGAWAVEGTAVALLRLLLLLLPPAIRG. Topologically, residues 29–269 are lumenal; that stretch reads PGLGVAGVAG…TPNPYASDNS (241 aa). A carbohydrate-binding residues include tyrosine 82, tyrosine 104, tyrosine 131, phenylalanine 132, and aspartate 201. Positions 221-265 are disordered; the sequence is LQPHPGLEKKEEEEEEEEYDEGSNLKKQTNKNRVQSGPRTPNPYA. A compositionally biased stretch (acidic residues) spans 231 to 241; it reads EEEEEEEEYDE. The segment covering 245–265 has biased composition (polar residues); that stretch reads LKKQTNKNRVQSGPRTPNPYA. Residue asparagine 268 is glycosylated (N-linked (GlcNAc...) asparagine). A helical transmembrane segment spans residues 270–290; the sequence is SLMFPILVAFGVFIPTLFCLC. Topologically, residues 291–292 are cytoplasmic; the sequence is RL.

It belongs to the malectin family. In terms of assembly, interacts with the oligosaccharyltransferase (OST) complex.

The protein resides in the endoplasmic reticulum membrane. In terms of biological role, carbohydrate-binding protein with a strong ligand preference for Glc2-N-glycan. May play a role in the early steps of protein N-glycosylation. This Homo sapiens (Human) protein is Malectin.